The following is a 139-amino-acid chain: Translation initiation factor 2 subunit beta (139 aa).

The protein belongs to the eIF-2-beta/eIF-5 family. Heterotrimer composed of an alpha, a beta and a gamma chain.

EIF-2 functions in the early steps of protein synthesis by forming a ternary complex with GTP and initiator tRNA. The chain is Translation initiation factor 2 subunit beta from Methanococcus aeolicus (strain ATCC BAA-1280 / DSM 17508 / OCM 812 / Nankai-3).